A 954-amino-acid chain; its full sequence is Glycine dehydrogenase (decarboxylating) (954 aa).

Lys-704 carries the N6-(pyridoxal phosphate)lysine modification.

It belongs to the GcvP family. In terms of assembly, the glycine cleavage system is composed of four proteins: P, T, L and H. Pyridoxal 5'-phosphate is required as a cofactor.

The enzyme catalyses N(6)-[(R)-lipoyl]-L-lysyl-[glycine-cleavage complex H protein] + glycine + H(+) = N(6)-[(R)-S(8)-aminomethyldihydrolipoyl]-L-lysyl-[glycine-cleavage complex H protein] + CO2. In terms of biological role, the glycine cleavage system catalyzes the degradation of glycine. The P protein binds the alpha-amino group of glycine through its pyridoxal phosphate cofactor; CO(2) is released and the remaining methylamine moiety is then transferred to the lipoamide cofactor of the H protein. The chain is Glycine dehydrogenase (decarboxylating) from Allorhizobium ampelinum (strain ATCC BAA-846 / DSM 112012 / S4) (Agrobacterium vitis (strain S4)).